Consider the following 146-residue polypeptide: MKDELNKVVVYTDGACSGNPGPGGWGAVLLFDNGEKTICGGHPNTTNNRMELTAVVQALKFLDVTYVIDLYTDSVYVKSGITSWIKKWKINGWRTADKLPVKNLELWLELDKIVKYHKITWYWVKAHSGNLYNEKADMLARSQIVK.

One can recognise an RNase H type-1 domain in the interval Glu4–Val145. Residues Asp13, Glu51, Asp73, and Asp137 each contribute to the Mg(2+) site.

Belongs to the RNase H family. As to quaternary structure, monomer. Requires Mg(2+) as cofactor.

It is found in the cytoplasm. It carries out the reaction Endonucleolytic cleavage to 5'-phosphomonoester.. In terms of biological role, endonuclease that specifically degrades the RNA of RNA-DNA hybrids. The chain is Ribonuclease H from Ehrlichia ruminantium (strain Gardel).